Reading from the N-terminus, the 223-residue chain is Kinetochore protein Spc25 (223 aa).

Residues 51–119 (RHQRKVGKLQ…NEIMERIQTL (69 aa)) adopt a coiled-coil conformation.

This sequence belongs to the SPC25 family. Component of the Ndc80 complex, which is composed of Ndc80, Nuf2 and Spc25.

Its subcellular location is the nucleus. The protein resides in the chromosome. It is found in the centromere. The protein localises to the kinetochore. Its function is as follows. Acts as a component of the essential kinetochore-associated Ndc80 complex, which is required for chromosome segregation and spindle checkpoint activity during meiosis and mitosis. Required for kinetochore integrity and the organization of stable microtubule binding sites in the outer plate of the kinetochore. Participates in SAC signaling that responds specifically to disruptions in spindle microtubule dynamics. The NDC80 complex synergistically enhances the affinity of the SKA1 complex for microtubules and may allow the NDC80 complex to track depolymerizing microtubules. This chain is Kinetochore protein Spc25, found in Drosophila teissieri (Fruit fly).